Reading from the N-terminus, the 529-residue chain is UDP-glucuronosyltransferase 2B11 (529 aa).

The signal sequence occupies residues 1–21 (MTLKWTSVLLLIHLSCYFSSG). K135 bears the N6-succinyllysine mark. Residue N315 is glycosylated (N-linked (GlcNAc...) asparagine). Residues 493–513 (VIGFLLACVATVIFIITKFCL) traverse the membrane as a helical segment.

The protein belongs to the UDP-glycosyltransferase family. In terms of tissue distribution, widely expressed.

The protein resides in the microsome membrane. Its subcellular location is the endoplasmic reticulum membrane. It catalyses the reaction glucuronate acceptor + UDP-alpha-D-glucuronate = acceptor beta-D-glucuronoside + UDP + H(+). In terms of biological role, UDPGT is of major importance in the conjugation and subsequent elimination of potentially toxic xenobiotics and endogenous compounds. The polypeptide is UDP-glucuronosyltransferase 2B11 (UGT2B11) (Homo sapiens (Human)).